Reading from the N-terminus, the 335-residue chain is Pyridoxal 5'-phosphate synthase subunit PdxS (335 aa).

A D-ribose 5-phosphate-binding site is contributed by D59. Residue K116 is the Schiff-base intermediate with D-ribose 5-phosphate of the active site. G188 provides a ligand contact to D-ribose 5-phosphate. Residue K200 participates in D-glyceraldehyde 3-phosphate binding. Residues G253 and 274 to 275 (GS) contribute to the D-ribose 5-phosphate site.

Belongs to the PdxS/SNZ family. In terms of assembly, in the presence of PdxT, forms a dodecamer of heterodimers.

The catalysed reaction is aldehydo-D-ribose 5-phosphate + D-glyceraldehyde 3-phosphate + L-glutamine = pyridoxal 5'-phosphate + L-glutamate + phosphate + 3 H2O + H(+). Its pathway is cofactor biosynthesis; pyridoxal 5'-phosphate biosynthesis. Functionally, catalyzes the formation of pyridoxal 5'-phosphate from ribose 5-phosphate (RBP), glyceraldehyde 3-phosphate (G3P) and ammonia. The ammonia is provided by the PdxT subunit. Can also use ribulose 5-phosphate and dihydroxyacetone phosphate as substrates, resulting from enzyme-catalyzed isomerization of RBP and G3P, respectively. This is Pyridoxal 5'-phosphate synthase subunit PdxS from Desulfurococcus amylolyticus (strain DSM 18924 / JCM 16383 / VKM B-2413 / 1221n) (Desulfurococcus kamchatkensis).